The primary structure comprises 234 residues: Large ribosomal subunit protein uL1 (234 aa).

Belongs to the universal ribosomal protein uL1 family. Part of the 50S ribosomal subunit.

Functionally, binds directly to 23S rRNA. The L1 stalk is quite mobile in the ribosome, and is involved in E site tRNA release. Protein L1 is also a translational repressor protein, it controls the translation of the L11 operon by binding to its mRNA. The sequence is that of Large ribosomal subunit protein uL1 from Escherichia coli (strain 55989 / EAEC).